The sequence spans 332 residues: HPr kinase/phosphorylase (332 aa).

Catalysis depends on residues H153 and K174. Residue 168–175 (GKSGLGKS) participates in ATP binding. S175 lines the Mg(2+) pocket. The active-site Proton acceptor; for phosphorylation activity. Proton donor; for dephosphorylation activity is the D192. Positions 217–226 (MEIRGLGVVD) are important for the catalytic mechanism of both phosphorylation and dephosphorylation. E218 lines the Mg(2+) pocket. R259 is an active-site residue. The tract at residues 280–285 (PIFPGK) is important for the catalytic mechanism of dephosphorylation.

It belongs to the HPrK/P family. Homohexamer. Mg(2+) is required as a cofactor.

The enzyme catalyses [HPr protein]-L-serine + ATP = [HPr protein]-O-phospho-L-serine + ADP + H(+). The catalysed reaction is [HPr protein]-O-phospho-L-serine + phosphate + H(+) = [HPr protein]-L-serine + diphosphate. Functionally, catalyzes the ATP- as well as the pyrophosphate-dependent phosphorylation of a specific serine residue in HPr, a phosphocarrier protein of the phosphoenolpyruvate-dependent sugar phosphotransferase system (PTS). HprK/P also catalyzes the pyrophosphate-producing, inorganic phosphate-dependent dephosphorylation (phosphorolysis) of seryl-phosphorylated HPr (P-Ser-HPr). The sequence is that of HPr kinase/phosphorylase from Chlorobium luteolum (strain DSM 273 / BCRC 81028 / 2530) (Pelodictyon luteolum).